The following is a 235-amino-acid chain: 2,3-bisphosphoglycerate-dependent phosphoglycerate mutase 1 (235 aa).

Substrate contacts are provided by residues 8–15, 21–22, R60, 87–90, K98, and 114–115; these read RHGESVAN, TG, ERHY, and RR. Residue H9 is the Tele-phosphohistidine intermediate of the active site. The active-site Proton donor/acceptor is the E87.

This sequence belongs to the phosphoglycerate mutase family. BPG-dependent PGAM subfamily.

It catalyses the reaction (2R)-2-phosphoglycerate = (2R)-3-phosphoglycerate. Its pathway is carbohydrate degradation; glycolysis; pyruvate from D-glyceraldehyde 3-phosphate: step 3/5. Catalyzes the interconversion of 2-phosphoglycerate and 3-phosphoglycerate. The polypeptide is 2,3-bisphosphoglycerate-dependent phosphoglycerate mutase 1 (Latilactobacillus sakei subsp. sakei (strain 23K) (Lactobacillus sakei subsp. sakei)).